The sequence spans 597 residues: Proteasome-associated ATPase (597 aa).

Over residues 1-12 (MQHDRPGSRPEE) the composition is skewed to basic and acidic residues. Positions 1-22 (MQHDRPGSRPEEGGEQQIGGDA) are disordered. Residues 21–97 (DAELNSQIRL…REEVDRLAQP (77 aa)) adopt a coiled-coil conformation. 284–289 (GCGKTL) provides a ligand contact to ATP. A docks into pockets in the proteasome alpha-ring region spans residues 596 to 597 (YL).

The protein belongs to the AAA ATPase family. In terms of assembly, homohexamer. Assembles into a hexameric ring structure that caps the 20S proteasome core. Strongly interacts with the prokaryotic ubiquitin-like protein Pup through a hydrophobic interface; the interacting region of ARC lies in its N-terminal coiled-coil domain. There is one Pup binding site per ARC hexamer ring. Upon ATP-binding, the C-terminus of ARC interacts with the alpha-rings of the proteasome core, possibly by binding to the intersubunit pockets.

Its pathway is protein degradation; proteasomal Pup-dependent pathway. ATPase which is responsible for recognizing, binding, unfolding and translocation of pupylated proteins into the bacterial 20S proteasome core particle. May be essential for opening the gate of the 20S proteasome via an interaction with its C-terminus, thereby allowing substrate entry and access to the site of proteolysis. Thus, the C-termini of the proteasomal ATPase may function like a 'key in a lock' to induce gate opening and therefore regulate proteolysis. The protein is Proteasome-associated ATPase of Saccharopolyspora erythraea (strain ATCC 11635 / DSM 40517 / JCM 4748 / NBRC 13426 / NCIMB 8594 / NRRL 2338).